Reading from the N-terminus, the 62-residue chain is Short neurotoxin B (62 aa).

Polar residues predominate over residues 1 to 16 (RRCFNHPSSQPQTNKS). The interval 1 to 21 (RRCFNHPSSQPQTNKSCPPGE) is disordered. Intrachain disulfides connect Cys3–Cys24, Cys17–Cys41, Cys43–Cys54, and Cys55–Cys60.

The protein belongs to the three-finger toxin family. Short-chain subfamily. Type I alpha-neurotoxin sub-subfamily. Expressed by the venom gland.

It is found in the secreted. Binds to muscle nicotinic acetylcholine receptor (nAChR) and inhibit acetylcholine from binding to the receptor, thereby impairing neuromuscular transmission. The protein is Short neurotoxin B of Laticauda crockeri (Crocker's sea snake).